The sequence spans 352 residues: Protein RecA (352 aa).

G66–T73 contacts ATP. The disordered stretch occupies residues T330–Q352.

Belongs to the RecA family.

The protein localises to the cytoplasm. Can catalyze the hydrolysis of ATP in the presence of single-stranded DNA, the ATP-dependent uptake of single-stranded DNA by duplex DNA, and the ATP-dependent hybridization of homologous single-stranded DNAs. It interacts with LexA causing its activation and leading to its autocatalytic cleavage. The chain is Protein RecA from Psychrobacter cryohalolentis (strain ATCC BAA-1226 / DSM 17306 / VKM B-2378 / K5).